Reading from the N-terminus, the 327-residue chain is uncharacterized protein (327 aa).

The S4 RNA-binding domain maps to 12–79 (KRLDEFLAKE…LKKELDLEIE (68 aa)). Asp-136 is an active-site residue.

It belongs to the pseudouridine synthase RluA family.

It catalyses the reaction a uridine in RNA = a pseudouridine in RNA. This is an uncharacterized protein from Helicobacter pylori (strain ATCC 700392 / 26695) (Campylobacter pylori).